Reading from the N-terminus, the 264-residue chain is Phosphonoacetaldehyde hydrolase (264 aa).

Aspartate 9 acts as the Nucleophile in catalysis. The Mg(2+) site is built by aspartate 9 and alanine 11. The Schiff-base intermediate with substrate role is filled by lysine 50. Aspartate 183 contacts Mg(2+).

It belongs to the HAD-like hydrolase superfamily. PhnX family. Homodimer. It depends on Mg(2+) as a cofactor.

The enzyme catalyses phosphonoacetaldehyde + H2O = acetaldehyde + phosphate + H(+). Its function is as follows. Involved in phosphonate degradation. This chain is Phosphonoacetaldehyde hydrolase, found in Bacillus cereus (strain G9842).